The sequence spans 153 residues: Arginine repressor (153 aa).

Belongs to the ArgR family.

The protein resides in the cytoplasm. The protein operates within amino-acid biosynthesis; L-arginine biosynthesis [regulation]. In terms of biological role, regulates arginine biosynthesis genes. The polypeptide is Arginine repressor (Glaesserella parasuis serovar 5 (strain SH0165) (Haemophilus parasuis)).